The sequence spans 366 residues: Aminomethyltransferase (366 aa).

Belongs to the GcvT family. The glycine cleavage system is composed of four proteins: P, T, L and H.

The catalysed reaction is N(6)-[(R)-S(8)-aminomethyldihydrolipoyl]-L-lysyl-[protein] + (6S)-5,6,7,8-tetrahydrofolate = N(6)-[(R)-dihydrolipoyl]-L-lysyl-[protein] + (6R)-5,10-methylene-5,6,7,8-tetrahydrofolate + NH4(+). In terms of biological role, the glycine cleavage system catalyzes the degradation of glycine. In Bacillus cereus (strain B4264), this protein is Aminomethyltransferase.